The chain runs to 92 residues: Small ribosomal subunit protein uS19 (92 aa).

This sequence belongs to the universal ribosomal protein uS19 family.

Protein S19 forms a complex with S13 that binds strongly to the 16S ribosomal RNA. The sequence is that of Small ribosomal subunit protein uS19 from Bacillus thuringiensis subsp. konkukian (strain 97-27).